The following is a 62-amino-acid chain: DNA-directed RNA polymerase subunit Rpo10 (62 aa).

Zn(2+)-binding residues include cysteine 6, cysteine 9, cysteine 43, and cysteine 44.

It belongs to the archaeal Rpo10/eukaryotic RPB10 RNA polymerase subunit family. Part of the RNA polymerase complex. The cofactor is Zn(2+).

It localises to the cytoplasm. The enzyme catalyses RNA(n) + a ribonucleoside 5'-triphosphate = RNA(n+1) + diphosphate. In terms of biological role, DNA-dependent RNA polymerase (RNAP) catalyzes the transcription of DNA into RNA using the four ribonucleoside triphosphates as substrates. The polypeptide is DNA-directed RNA polymerase subunit Rpo10 (Methanococcoides burtonii (strain DSM 6242 / NBRC 107633 / OCM 468 / ACE-M)).